Here is a 712-residue protein sequence, read N- to C-terminus: Ribosome-releasing factor 2, mitochondrial (712 aa).

Residues 1-29 constitute a mitochondrion transit peptide; sequence MLRCAWQNGPRQSNRWLRHLSNQIWKRSY. The 280-residue stretch at 31-310 folds into the tr-type G domain; that stretch reads SKIRNIGILA…AVNSYLPAPE (280 aa). GTP-binding positions include 40–47, 104–108, and 158–161; these read AHIDAGKT, DTPGH, and NKMD.

It belongs to the TRAFAC class translation factor GTPase superfamily. Classic translation factor GTPase family. EF-G/EF-2 subfamily.

The protein localises to the mitochondrion. Functionally, mitochondrial GTPase that mediates the disassembly of ribosomes from messenger RNA at the termination of mitochondrial protein biosynthesis. Not involved in the GTP-dependent ribosomal translocation step during translation elongation. The sequence is that of Ribosome-releasing factor 2, mitochondrial from Drosophila yakuba (Fruit fly).